A 148-amino-acid chain; its full sequence is Putative ankyrin repeat protein RF_1158 (148 aa).

The ANK repeat unit spans residues 82–115 (RPTTALGIAIAQGNSEEVIKYLLANGADPKLAFD).

This is Putative ankyrin repeat protein RF_1158 from Rickettsia felis (strain ATCC VR-1525 / URRWXCal2) (Rickettsia azadi).